Here is a 121-residue protein sequence, read N- to C-terminus: Large ribosomal subunit protein bL12 (121 aa).

This sequence belongs to the bacterial ribosomal protein bL12 family. In terms of assembly, homodimer. Part of the ribosomal stalk of the 50S ribosomal subunit. Forms a multimeric L10(L12)X complex, where L10 forms an elongated spine to which 2 to 4 L12 dimers bind in a sequential fashion. Binds GTP-bound translation factors.

Its function is as follows. Forms part of the ribosomal stalk which helps the ribosome interact with GTP-bound translation factors. Is thus essential for accurate translation. This is Large ribosomal subunit protein bL12 from Salmonella agona (strain SL483).